Consider the following 61-residue polypeptide: Putative MSV199 domain-containing protein 200R (61 aa).

This is Putative MSV199 domain-containing protein 200R from Invertebrate iridescent virus 6 (IIV-6).